Reading from the N-terminus, the 857-residue chain is Bifunctional uridylyltransferase/uridylyl-removing enzyme (857 aa).

The interval Met1–Glu322 is uridylyltransferase. A uridylyl-removing region spans residues Ile323–Leu679. The region spanning Val441 to Leu563 is the HD domain. ACT domains follow at residues Gln680–Gln760 and Leu788–Ile857.

Belongs to the GlnD family. Requires Mg(2+) as cofactor.

The catalysed reaction is [protein-PII]-L-tyrosine + UTP = [protein-PII]-uridylyl-L-tyrosine + diphosphate. It carries out the reaction [protein-PII]-uridylyl-L-tyrosine + H2O = [protein-PII]-L-tyrosine + UMP + H(+). Uridylyltransferase (UTase) activity is inhibited by glutamine, while glutamine activates uridylyl-removing (UR) activity. In terms of biological role, modifies, by uridylylation and deuridylylation, the PII regulatory proteins (GlnB and homologs), in response to the nitrogen status of the cell that GlnD senses through the glutamine level. Under low glutamine levels, catalyzes the conversion of the PII proteins and UTP to PII-UMP and PPi, while under higher glutamine levels, GlnD hydrolyzes PII-UMP to PII and UMP (deuridylylation). Thus, controls uridylylation state and activity of the PII proteins, and plays an important role in the regulation of nitrogen assimilation and metabolism. This chain is Bifunctional uridylyltransferase/uridylyl-removing enzyme, found in Cupriavidus metallidurans (strain ATCC 43123 / DSM 2839 / NBRC 102507 / CH34) (Ralstonia metallidurans).